Reading from the N-terminus, the 716-residue chain is Fatty acid oxidation complex subunit alpha (716 aa).

An enoyl-CoA hydratase/isomerase region spans residues 1 to 189 (MIYQSPTIQV…KVGAVDAVVA (189 aa)). A substrate-binding site is contributed by D296. Residues 311–716 (KDVKSAAVLG…AANNGSYYQA (406 aa)) are 3-hydroxyacyl-CoA dehydrogenase. Residues M324, D343, 400-402 (VVE), K407, and S429 each bind NAD(+). The active-site For 3-hydroxyacyl-CoA dehydrogenase activity is H450. Residue N453 participates in NAD(+) binding. Substrate-binding residues include N500 and Y660.

This sequence in the N-terminal section; belongs to the enoyl-CoA hydratase/isomerase family. In the C-terminal section; belongs to the 3-hydroxyacyl-CoA dehydrogenase family. In terms of assembly, heterotetramer of two alpha chains (FadB) and two beta chains (FadA).

It carries out the reaction a (3S)-3-hydroxyacyl-CoA + NAD(+) = a 3-oxoacyl-CoA + NADH + H(+). The catalysed reaction is a (3S)-3-hydroxyacyl-CoA = a (2E)-enoyl-CoA + H2O. The enzyme catalyses a 4-saturated-(3S)-3-hydroxyacyl-CoA = a (3E)-enoyl-CoA + H2O. It catalyses the reaction (3S)-3-hydroxybutanoyl-CoA = (3R)-3-hydroxybutanoyl-CoA. It carries out the reaction a (3Z)-enoyl-CoA = a 4-saturated (2E)-enoyl-CoA. The catalysed reaction is a (3E)-enoyl-CoA = a 4-saturated (2E)-enoyl-CoA. It participates in lipid metabolism; fatty acid beta-oxidation. In terms of biological role, involved in the aerobic and anaerobic degradation of long-chain fatty acids via beta-oxidation cycle. Catalyzes the formation of 3-oxoacyl-CoA from enoyl-CoA via L-3-hydroxyacyl-CoA. It can also use D-3-hydroxyacyl-CoA and cis-3-enoyl-CoA as substrate. This Shewanella sp. (strain ANA-3) protein is Fatty acid oxidation complex subunit alpha.